A 518-amino-acid chain; its full sequence is Probable thiamine biosynthetic bifunctional enzyme (518 aa).

The thiamine-phosphate synthase stretch occupies residues 1–229 (MKRQIDYSLY…ATPPCFAQAR (229 aa)). 4-amino-2-methyl-5-(diphosphooxymethyl)pyrimidine is bound by residues 40–44 (QHREK) and asparagine 72. Aspartate 73 and aspartate 92 together coordinate Mg(2+). Position 111 (serine 111) interacts with 4-amino-2-methyl-5-(diphosphooxymethyl)pyrimidine. 137-139 (TNT) provides a ligand contact to 2-[(2R,5Z)-2-carboxy-4-methylthiazol-5(2H)-ylidene]ethyl phosphate. Lysine 140 contributes to the 4-amino-2-methyl-5-(diphosphooxymethyl)pyrimidine binding site. 2-[(2R,5Z)-2-carboxy-4-methylthiazol-5(2H)-ylidene]ethyl phosphate is bound by residues glycine 173 and 199–200 (VS). The hydroxyethylthiazole kinase stretch occupies residues 230 to 518 (SSLTTPKDLL…IERAKLEKAE (289 aa)). Methionine 281 is a binding site for 5-(2-hydroxyethyl)-4-methylthiazole. 2 residues coordinate ATP: lysine 355 and serine 403. Position 430 (alanine 430) interacts with 5-(2-hydroxyethyl)-4-methylthiazole. Cysteine 433 serves as the catalytic Proton acceptor; for hydroxyethylthiazole kinase activity.

In the N-terminal section; belongs to the thiamine-phosphate synthase family. It in the C-terminal section; belongs to the Thz kinase family. Mg(2+) serves as cofactor.

The catalysed reaction is 2-[(2R,5Z)-2-carboxy-4-methylthiazol-5(2H)-ylidene]ethyl phosphate + 4-amino-2-methyl-5-(diphosphooxymethyl)pyrimidine + 2 H(+) = thiamine phosphate + CO2 + diphosphate. The enzyme catalyses 2-(2-carboxy-4-methylthiazol-5-yl)ethyl phosphate + 4-amino-2-methyl-5-(diphosphooxymethyl)pyrimidine + 2 H(+) = thiamine phosphate + CO2 + diphosphate. It catalyses the reaction 4-methyl-5-(2-phosphooxyethyl)-thiazole + 4-amino-2-methyl-5-(diphosphooxymethyl)pyrimidine + H(+) = thiamine phosphate + diphosphate. It carries out the reaction 5-(2-hydroxyethyl)-4-methylthiazole + ATP = 4-methyl-5-(2-phosphooxyethyl)-thiazole + ADP + H(+). Its pathway is cofactor biosynthesis; thiamine diphosphate biosynthesis; 4-methyl-5-(2-phosphoethyl)-thiazole from 5-(2-hydroxyethyl)-4-methylthiazole: step 1/1. It participates in cofactor biosynthesis; thiamine diphosphate biosynthesis; thiamine phosphate from 4-amino-2-methyl-5-diphosphomethylpyrimidine and 4-methyl-5-(2-phosphoethyl)-thiazole: step 1/1. Condenses 4-methyl-5-(beta-hydroxyethyl)thiazole monophosphate (THZ-P) and 2-methyl-4-amino-5-hydroxymethyl pyrimidine pyrophosphate (HMP-PP) to form thiamine monophosphate (TMP). The protein is Probable thiamine biosynthetic bifunctional enzyme (thi4) of Schizosaccharomyces pombe (strain 972 / ATCC 24843) (Fission yeast).